The sequence spans 229 residues: MANPTHLGFQDAMSPLMEELLYFHDHTLMILFLISSLVFYMIFALLFPKLYYPNTSDVQEVEVIWTVLPAIVLISIALPSLRTLYLMDETNNPCLTIKVTGHQWYWSYEYTDFSTLEFDSYMIPTQDLPQGHFRLLEVDHRMITPTNSTIRVLITAEDVLHSWAIPSIGTKMDAVPGRLNQVMITLANPGVFYGQCSEICGANHSFMPITMETIPLNHFQLWLEDSILS.

At 1-14 the chain is on the mitochondrial intermembrane side; sequence MANPTHLGFQDAMS. The helical transmembrane segment at 15–45 threads the bilayer; it reads PLMEELLYFHDHTLMILFLISSLVFYMIFAL. Residues 46–59 are Mitochondrial matrix-facing; the sequence is LFPKLYYPNTSDVQ. Residues 60-87 form a helical membrane-spanning segment; that stretch reads EVEVIWTVLPAIVLISIALPSLRTLYLM. Topologically, residues 88–229 are mitochondrial intermembrane; that stretch reads DETNNPCLTI…QLWLEDSILS (142 aa). Residues His161, Cys196, Glu198, Cys200, His204, and Met207 each coordinate Cu cation. Glu198 is a Mg(2+) binding site.

This sequence belongs to the cytochrome c oxidase subunit 2 family. As to quaternary structure, component of the cytochrome c oxidase (complex IV, CIV), a multisubunit enzyme composed of 14 subunits. The complex is composed of a catalytic core of 3 subunits MT-CO1, MT-CO2 and MT-CO3, encoded in the mitochondrial DNA, and 11 supernumerary subunits COX4I, COX5A, COX5B, COX6A, COX6B, COX6C, COX7A, COX7B, COX7C, COX8 and NDUFA4, which are encoded in the nuclear genome. The complex exists as a monomer or a dimer and forms supercomplexes (SCs) in the inner mitochondrial membrane with NADH-ubiquinone oxidoreductase (complex I, CI) and ubiquinol-cytochrome c oxidoreductase (cytochrome b-c1 complex, complex III, CIII), resulting in different assemblies (supercomplex SCI(1)III(2)IV(1) and megacomplex MCI(2)III(2)IV(2)). Found in a complex with TMEM177, COA6, COX18, COX20, SCO1 and SCO2. Interacts with TMEM177 in a COX20-dependent manner. Interacts with COX20. Interacts with COX16. Cu cation serves as cofactor.

It is found in the mitochondrion inner membrane. It carries out the reaction 4 Fe(II)-[cytochrome c] + O2 + 8 H(+)(in) = 4 Fe(III)-[cytochrome c] + 2 H2O + 4 H(+)(out). Component of the cytochrome c oxidase, the last enzyme in the mitochondrial electron transport chain which drives oxidative phosphorylation. The respiratory chain contains 3 multisubunit complexes succinate dehydrogenase (complex II, CII), ubiquinol-cytochrome c oxidoreductase (cytochrome b-c1 complex, complex III, CIII) and cytochrome c oxidase (complex IV, CIV), that cooperate to transfer electrons derived from NADH and succinate to molecular oxygen, creating an electrochemical gradient over the inner membrane that drives transmembrane transport and the ATP synthase. Cytochrome c oxidase is the component of the respiratory chain that catalyzes the reduction of oxygen to water. Electrons originating from reduced cytochrome c in the intermembrane space (IMS) are transferred via the dinuclear copper A center (CU(A)) of subunit 2 and heme A of subunit 1 to the active site in subunit 1, a binuclear center (BNC) formed by heme A3 and copper B (CU(B)). The BNC reduces molecular oxygen to 2 water molecules using 4 electrons from cytochrome c in the IMS and 4 protons from the mitochondrial matrix. In Alligator mississippiensis (American alligator), this protein is Cytochrome c oxidase subunit 2 (MT-CO2).